The sequence spans 191 residues: MIRGGALTHVALGLTVFLLLAVVHSQEKCSKTCIAQKCNVLGIRYGKYCGIGYFGCPGEPPCDDLDDCCMTHDNCVDLKGMTYVDCHKQFQRCVNELKQSIQESNNQKVGFSKECPYSTVIPTVYRGMNYGIFFSGIGNIIIPKKPASAGPVVEVDLARSKADTKDGLGTNQGPQTKDGSKVSVPMNPSPS.

The first 25 residues, Met1–Ser25, serve as a signal peptide directing secretion. Cystine bridges form between Cys29-Cys56, Cys33-Cys62, Cys38-Cys115, Cys49-Cys69, Cys68-Cys93, and Cys75-Cys86. Residues Tyr48, Gly50, and Tyr53 each contribute to the Ca(2+) site. Residue His72 is part of the active site. Asp73 lines the Ca(2+) pocket. Residues Lys161–Ser191 are disordered.

Belongs to the phospholipase A2 family. The cofactor is Ca(2+). As to expression, specifically expressed in flowers but at a low level. Detected specifically in the pollen.

The protein localises to the secreted. The protein resides in the endoplasmic reticulum. It carries out the reaction a 1,2-diacyl-sn-glycero-3-phosphocholine + H2O = a 1-acyl-sn-glycero-3-phosphocholine + a fatty acid + H(+). Its function is as follows. PA2 catalyzes the calcium-dependent hydrolysis of the 2-acyl groups in 3-sn-phosphoglycerides. Releases lysophospholipids (LPLs) and free fatty acids (FFAs) from membrane phospholipids in response to hormones and other external stimuli. Plays a role in pollen development and germination and tube growth. This Arabidopsis thaliana (Mouse-ear cress) protein is Phospholipase A2-delta (PLA2-DELTA).